A 78-amino-acid polypeptide reads, in one-letter code: Pigment-dispersing hormone 2 peptides (78 aa).

The signal sequence occupies residues 1–21 (MRSGVFVAVLVVVVFALLTQG). The residue at position 75 (A75) is an Alanine amide.

Belongs to the arthropod PDH family. In terms of tissue distribution, eyestalk sinus gland.

Its subcellular location is the secreted. Its function is as follows. The pigment-dispersing hormone causes the migration of the distal retinal pigment into the proximal end of the pigment chromatophore cells and thus decreases the amount of light entering the retinulas. May also function as a neurotransmitter and/or neuromodulator. This is Pigment-dispersing hormone 2 peptides (PDH2) from Callinectes sapidus (Blue crab).